Consider the following 884-residue polypeptide: Schlafen family member 5 (884 aa).

574 to 581 (GLPGSGKT) is an ATP binding site.

It belongs to the Schlafen family. Subgroup III subfamily.

Functionally, may have a role in hematopoietic cell differentiation. This Mus musculus (Mouse) protein is Schlafen family member 5 (Slfn5).